The primary structure comprises 357 residues: 4-hydroxy-3-methylbut-2-en-1-yl diphosphate synthase (flavodoxin) (357 aa).

Residues cysteine 264, cysteine 267, cysteine 299, and glutamate 306 each coordinate [4Fe-4S] cluster.

The protein belongs to the IspG family. The cofactor is [4Fe-4S] cluster.

It catalyses the reaction (2E)-4-hydroxy-3-methylbut-2-enyl diphosphate + oxidized [flavodoxin] + H2O + 2 H(+) = 2-C-methyl-D-erythritol 2,4-cyclic diphosphate + reduced [flavodoxin]. It participates in isoprenoid biosynthesis; isopentenyl diphosphate biosynthesis via DXP pathway; isopentenyl diphosphate from 1-deoxy-D-xylulose 5-phosphate: step 5/6. Functionally, converts 2C-methyl-D-erythritol 2,4-cyclodiphosphate (ME-2,4cPP) into 1-hydroxy-2-methyl-2-(E)-butenyl 4-diphosphate. In Campylobacter jejuni subsp. jejuni serotype O:2 (strain ATCC 700819 / NCTC 11168), this protein is 4-hydroxy-3-methylbut-2-en-1-yl diphosphate synthase (flavodoxin).